The sequence spans 870 residues: Phenylalanine--tRNA ligase beta subunit (870 aa).

Residues 39–148 form the tRNA-binding domain; sequence AADLQKFEVA…EDAVVGEPFT (110 aa). A B5 domain is found at 427–551; it reads PAKKTLDFPA…RIYGYDKIES (125 aa). Residues 450-498 enclose the RPE1 insert domain; sequence LLHNEANKGEFVGNTEHSIAAYKEVREDASTGLTPKLPLEASYVKGLNI. Residues Asp-529, Asp-535, Glu-538, and Glu-539 each coordinate Mg(2+). The FDX-ACB domain occupies 776–869; the sequence is SDYQANFRDY…IEQKFQGTLR (94 aa).

Belongs to the phenylalanyl-tRNA synthetase beta subunit family. Type 1 subfamily. In terms of assembly, tetramer of two alpha and two beta subunits. The cofactor is Mg(2+).

It localises to the cytoplasm. The enzyme catalyses tRNA(Phe) + L-phenylalanine + ATP = L-phenylalanyl-tRNA(Phe) + AMP + diphosphate + H(+). The polypeptide is Phenylalanine--tRNA ligase beta subunit (pheT) (Rickettsia bellii (strain RML369-C)).